Reading from the N-terminus, the 296-residue chain is Ribosomal RNA small subunit methyltransferase A (296 aa).

N40, V42, G67, E88, D118, and N137 together coordinate S-adenosyl-L-methionine.

This sequence belongs to the class I-like SAM-binding methyltransferase superfamily. rRNA adenine N(6)-methyltransferase family. RsmA subfamily.

It is found in the cytoplasm. It carries out the reaction adenosine(1518)/adenosine(1519) in 16S rRNA + 4 S-adenosyl-L-methionine = N(6)-dimethyladenosine(1518)/N(6)-dimethyladenosine(1519) in 16S rRNA + 4 S-adenosyl-L-homocysteine + 4 H(+). Its function is as follows. Specifically dimethylates two adjacent adenosines (A1518 and A1519) in the loop of a conserved hairpin near the 3'-end of 16S rRNA in the 30S particle. May play a critical role in biogenesis of 30S subunits. The chain is Ribosomal RNA small subunit methyltransferase A from Rhodococcus opacus (strain B4).